Here is a 619-residue protein sequence, read N- to C-terminus: Zinc finger protein 668 (619 aa).

N-acetylmethionine is present on M1. At S10 the chain carries Phosphoserine. The segment at 22 to 44 (YKCLFCTKTFPNAPRAARHAATH) adopts a C2H2-type 1 zinc-finger fold. Residues 36–74 (RAARHAATHTPTDCTEEVREAQPKVDTEPKAEEASGDKV) are disordered. The segment covering 51–71 (EEVREAQPKVDTEPKAEEASG) has biased composition (basic and acidic residues). Residues K59, K65, and K80 each participate in a glycyl lysine isopeptide (Lys-Gly) (interchain with G-Cter in SUMO2) cross-link. C2H2-type zinc fingers lie at residues 84–106 (YACP…GRSH), 112–134 (FPCP…LASH), 140–162 (FRCT…QRGH), 168–190 (YACP…RRTH), 196–218 (YSCE…ERSH), 224–246 (FLCS…QRIH), 252–274 (YRCP…ERTH), 280–302 (FLCP…QRAH), 308–330 (YRCE…RRVH), 336–358 (FKCL…ALVH), and 364–386 (FRCE…SRMH). A Glycyl lysine isopeptide (Lys-Gly) (interchain with G-Cter in SUMO2) cross-link involves residue K154. The residue at position 387 (S387) is a Phosphoserine. The C2H2-type 13 zinc-finger motif lies at 392–414 (FHCNACGKSFVVLSSLRKHERTH). Residues 491-513 (VGEAPSTLGDAGEVGGEETDEKP) are disordered. K512 participates in a covalent cross-link: Glycyl lysine isopeptide (Lys-Gly) (interchain with G-Cter in SUMO2). 3 consecutive C2H2-type zinc fingers follow at residues 516–538 (FVCR…ERSH), 544–566 (FPCT…SRTH), and 572–594 (YSCS…ERTH).

Belongs to the krueppel C2H2-type zinc-finger protein family.

It localises to the nucleus. In terms of biological role, may be involved in transcriptional regulation. May play a role in DNA repair process. The chain is Zinc finger protein 668 (Znf668) from Mus musculus (Mouse).